A 154-amino-acid chain; its full sequence is 17.8 kDa class I heat shock protein (154 aa).

The sHSP domain occupies 40-154 (ESSAFANTRI…PEVKSIEISG (115 aa)).

It belongs to the small heat shock protein (HSP20) family. As to quaternary structure, forms oligomeric structures.

Its subcellular location is the cytoplasm. This chain is 17.8 kDa class I heat shock protein, found in Solanum lycopersicum (Tomato).